The primary structure comprises 211 residues: MRNIQIALTKGRLEKHVIPLFEQIGIDCSELKNKGRKLVFQSKNTDISFILVKAVDVATYVEHGVADIGVVGKDILMENEKDIYEMLDLGVGVCKFCVASIPTYNPKSYRKKCIATKYPHITSNYFHNKGEDVEIIKIEGSVEIAPILGLADAIVDIVETGKTLQENGLIVFEEMYSISARMIVNKAALKTKKDEIFSIINMMEQEILSGK.

This sequence belongs to the ATP phosphoribosyltransferase family. Short subfamily. Heteromultimer composed of HisG and HisZ subunits.

It localises to the cytoplasm. It catalyses the reaction 1-(5-phospho-beta-D-ribosyl)-ATP + diphosphate = 5-phospho-alpha-D-ribose 1-diphosphate + ATP. It functions in the pathway amino-acid biosynthesis; L-histidine biosynthesis; L-histidine from 5-phospho-alpha-D-ribose 1-diphosphate: step 1/9. Catalyzes the condensation of ATP and 5-phosphoribose 1-diphosphate to form N'-(5'-phosphoribosyl)-ATP (PR-ATP). Has a crucial role in the pathway because the rate of histidine biosynthesis seems to be controlled primarily by regulation of HisG enzymatic activity. This Bacillus cereus (strain 03BB102) protein is ATP phosphoribosyltransferase.